An 87-amino-acid chain; its full sequence is Putative defensin-like protein 317 (87 aa).

Positions 1–24 (MKSFLVAFLIVLVFFCVEMKIGNG) are cleaved as a signal peptide. 3 disulfides stabilise this stretch: Cys-38–Cys-71, Cys-47–Cys-80, and Cys-56–Cys-82.

The protein belongs to the DEFL family.

Its subcellular location is the secreted. This chain is Putative defensin-like protein 317, found in Arabidopsis thaliana (Mouse-ear cress).